The following is a 395-amino-acid chain: Carbamoyl phosphate synthase small chain (395 aa).

The segment at 1-192 is CPSase; sequence MTYNLHPAIL…LQYKTDKMYG (192 aa). L-glutamine is bound by residues S50, G244, and G246. In terms of domain architecture, Glutamine amidotransferase type-1 spans 196 to 383; it reads KIILIDFGVK…INLIKHFKQY (188 aa). The active-site Nucleophile is the C273. 5 residues coordinate L-glutamine: M274, Q277, N313, G315, and F316. Catalysis depends on residues H356 and E358.

The protein belongs to the CarA family. In terms of assembly, composed of two chains; the small (or glutamine) chain promotes the hydrolysis of glutamine to ammonia, which is used by the large (or ammonia) chain to synthesize carbamoyl phosphate. Tetramer of heterodimers (alpha,beta)4.

The protein resides in the plastid. Its subcellular location is the chloroplast. It carries out the reaction hydrogencarbonate + L-glutamine + 2 ATP + H2O = carbamoyl phosphate + L-glutamate + 2 ADP + phosphate + 2 H(+). The enzyme catalyses L-glutamine + H2O = L-glutamate + NH4(+). Its pathway is amino-acid biosynthesis; L-arginine biosynthesis; carbamoyl phosphate from bicarbonate: step 1/1. It participates in pyrimidine metabolism; UMP biosynthesis via de novo pathway; (S)-dihydroorotate from bicarbonate: step 1/3. Its function is as follows. Small subunit of the glutamine-dependent carbamoyl phosphate synthetase (CPSase). CPSase catalyzes the formation of carbamoyl phosphate from the ammonia moiety of glutamine, carbonate, and phosphate donated by ATP, constituting the first step of 2 biosynthetic pathways, one leading to arginine and/or urea and the other to pyrimidine nucleotides. The small subunit (glutamine amidotransferase) binds and cleaves glutamine to supply the large subunit with the substrate ammonia. This chain is Carbamoyl phosphate synthase small chain, found in Gracilaria tenuistipitata var. liui (Red alga).